We begin with the raw amino-acid sequence, 240 residues long: Uridylate kinase (240 aa).

An ATP-binding site is contributed by 12-15 (KLSG). The interval 20 to 25 (GEQGNG) is involved in allosteric activation by GTP. A UMP-binding site is contributed by Gly-54. The ATP site is built by Gly-55 and Arg-59. UMP contacts are provided by residues Asp-74 and 135-142 (TGNPYFST). Positions 163, 169, and 172 each coordinate ATP.

The protein belongs to the UMP kinase family. In terms of assembly, homohexamer.

It localises to the cytoplasm. The catalysed reaction is UMP + ATP = UDP + ADP. It functions in the pathway pyrimidine metabolism; CTP biosynthesis via de novo pathway; UDP from UMP (UMPK route): step 1/1. With respect to regulation, allosterically activated by GTP. Inhibited by UTP. In terms of biological role, catalyzes the reversible phosphorylation of UMP to UDP. This chain is Uridylate kinase, found in Bacillus velezensis (strain DSM 23117 / BGSC 10A6 / LMG 26770 / FZB42) (Bacillus amyloliquefaciens subsp. plantarum).